Here is a 307-residue protein sequence, read N- to C-terminus: Aspartate carbamoyltransferase catalytic subunit (307 aa).

The carbamoyl phosphate site is built by Arg56 and Thr57. Position 84 (Lys84) interacts with L-aspartate. Arg106, His136, and Gln139 together coordinate carbamoyl phosphate. Arg169 and Arg221 together coordinate L-aspartate. Ala262 and Pro263 together coordinate carbamoyl phosphate.

Belongs to the aspartate/ornithine carbamoyltransferase superfamily. ATCase family. As to quaternary structure, heterododecamer (2C3:3R2) of six catalytic PyrB chains organized as two trimers (C3), and six regulatory PyrI chains organized as three dimers (R2).

The enzyme catalyses carbamoyl phosphate + L-aspartate = N-carbamoyl-L-aspartate + phosphate + H(+). Its pathway is pyrimidine metabolism; UMP biosynthesis via de novo pathway; (S)-dihydroorotate from bicarbonate: step 2/3. Functionally, catalyzes the condensation of carbamoyl phosphate and aspartate to form carbamoyl aspartate and inorganic phosphate, the committed step in the de novo pyrimidine nucleotide biosynthesis pathway. This Streptococcus pneumoniae (strain 70585) protein is Aspartate carbamoyltransferase catalytic subunit.